We begin with the raw amino-acid sequence, 80 residues long: SPI-1 type 3 secretion system needle filament protein (80 aa).

The protein belongs to the SctF family. The core secretion machinery of the T3SS is composed of approximately 20 different proteins, including cytoplasmic components, a base, an export apparatus and a needle. This subunit polymerizes and forms the helical needle filament. Interacts with the needle tip protein SipD/SctA. Interacts with the needle adapter protein PrgJ/SctI, the secretin InvG/SctC and the minor export apparatus protein SpaP/SctR. In vitro, the needle protomer refolds spontaneously to extend the needle from the distal end.

The protein localises to the secreted. The protein resides in the cell surface. With respect to regulation, binding of bile salts, including deoxycholate, to the PrgI:SipD interface may inhibit the T3SS function. In terms of biological role, component of the type III secretion system (T3SS), also called injectisome, which is used to inject bacterial effector proteins into eukaryotic host cells. PrgI/SctF1 forms the external needle filament that protrudes from the bacterial surface. Is probably involved in the transduction of an activating signal, thought to be mediated by the distal tip of the needle filament, to the secretion machine. Required for invasion of epithelial cells. Required for the secretion of the effector protein SptP. Functionally, during infection, can induce innate immune responses. The needle proteins interact with host TLR2 or TLR4, and induce signaling by NF-kappa-B and/or AP-1. This activation is MyD88 dependent and results in increased expression of cytokines, including TNF-alpha, IL-6 and IL-8. This is SPI-1 type 3 secretion system needle filament protein from Salmonella typhimurium (strain LT2 / SGSC1412 / ATCC 700720).